Consider the following 796-residue polypeptide: N-terminal acetyltransferase B complex subunit MDM20 (796 aa).

Ser2 is subject to N-acetylserine.

It belongs to the MDM20/NAA25 family. Component of the N-terminal acetyltransferase B (NatB) complex, which is composed of NAT3 and MDM20.

It localises to the cytoplasm. Its function is as follows. Non-catalytic subunit of the NatB N-terminal acetyltransferase, which catalyzes acetylation of the amino-terminal methionine residues of all proteins beginning with Met-Asp or Met-Glu and of some proteins beginning with Met-Asn or Met-Met. NatB acetylates TPM1 protein and regulates tropomyocin-actin interactions. MDM20 is required for mitochondrial inheritance during budding and together with TPM1, is essential for the integrity and assembly of actin cables. Genetically interacts with CIN8. The polypeptide is N-terminal acetyltransferase B complex subunit MDM20 (MDM20) (Saccharomyces cerevisiae (strain ATCC 204508 / S288c) (Baker's yeast)).